Here is a 120-residue protein sequence, read N- to C-terminus: Small ribosomal subunit protein uS13 (120 aa).

The segment at 94–120 is disordered; sequence GLPLRGQRTRTNARTRKGPRKAIAGKK.

It belongs to the universal ribosomal protein uS13 family. In terms of assembly, part of the 30S ribosomal subunit. Forms a loose heterodimer with protein S19. Forms two bridges to the 50S subunit in the 70S ribosome.

Its function is as follows. Located at the top of the head of the 30S subunit, it contacts several helices of the 16S rRNA. In the 70S ribosome it contacts the 23S rRNA (bridge B1a) and protein L5 of the 50S subunit (bridge B1b), connecting the 2 subunits; these bridges are implicated in subunit movement. Contacts the tRNAs in the A and P-sites. The chain is Small ribosomal subunit protein uS13 from Aromatoleum aromaticum (strain DSM 19018 / LMG 30748 / EbN1) (Azoarcus sp. (strain EbN1)).